Here is a 652-residue protein sequence, read N- to C-terminus: Fimbrin-4 (652 aa).

Calponin-homology (CH) domains follow at residues 116-233, 261-364, 388-494, and 509-617; these read ESEK…KIQL, LAPE…HHRN, SREE…RYTM, and DITE…NWSL. 2 actin-binding regions span residues 116-364 and 388-617; these read ESEK…HHRN and SREE…NWSL. Residues 623–652 are disordered; it reads TESTVSDDTDVSSVTEEISNLSTDDGSSDV. Residues 640–652 are compositionally biased toward polar residues; it reads ISNLSTDDGSSDV.

Interacts with F-actin.

It localises to the cytoplasm. The protein resides in the cytoskeleton. Its function is as follows. Cross-links actin filaments (F-actin). Stabilizes and prevents F-actin depolymerization mediated by profilin. May regulate actin cytoarchitecture, cell cycle, cell division, cell elongation and cytoplasmic tractus. This chain is Fimbrin-4, found in Arabidopsis thaliana (Mouse-ear cress).